A 763-amino-acid polypeptide reads, in one-letter code: Endoplasmic reticulum membrane sensor NFE2L1 (763 aa).

The helical; Signal-anchor for type II membrane protein transmembrane segment at 7-24 threads the bilayer; that stretch reads YLTEGLLQFTILLSLIGV. Residues 108-150 form a disordered region; it reads DPEGSVSGSQPSSGLALESSSGLQDVTGPDNGVRESETEQGFS. The segment covering 116-131 has biased composition (low complexity); it reads SQPSSGLALESSSGLQ. The tract at residues 180–188 is cholesterol recognition/amino acid consensus (CRAC) region; the sequence is IFDYSHRQK. N-linked (GlcNAc...) asparagine glycans are attached at residues asparagine 338 and asparagine 350. Residues 369–373 form a CPD region; sequence SPEVE. A glycan (N-linked (GlcNAc...) asparagine) is linked at asparagine 413. Disordered stretches follow at residues 460 to 523 and 585 to 604; these read EEEF…DSET and TLKKGSKEKQADFLDKQMSR. A Destruction motif motif is present at residues 466 to 470; it reads DSGLS. The segment covering 466–514 has biased composition (low complexity); it reads DSGLSLDSSHSPSSLSSSEGSSSSSSSSSSSSSSSASSSASSSFSEEGA. At serine 519 the chain carries Phosphoserine; by CK2. Over residues 589–604 the composition is skewed to basic and acidic residues; sequence GSKEKQADFLDKQMSR. Serine 590 carries the phosphoserine; by PKA modification. In terms of domain architecture, bZIP spans 645-708; sequence LIRDIRRRGK…RQMKQKVQSL (64 aa). Residues 647-666 are basic motif; that stretch reads RDIRRRGKNKMAAQNCRKRK. The interval 673-687 is leucine-zipper; that stretch reads LERDVEDLQRDKARL. The short motif at 752 to 759 is the Nuclear localization signal element; that stretch reads RRQERKPK.

The protein belongs to the bZIP family. CNC subfamily. Interacts with KEAP1. As to quaternary structure, interacts (via CPD region) with FBXW7; leading to its ubiquitination and degradation. Interacts with SYVN1/HRD1; leading to its ubiquitination and degradation. Interacts (when ubiquitinated) with DDI2; leading to its cleavage. In terms of assembly, interacts (via the bZIP domain) with small MAF protein (MAFF, MAFG or MAFK); required for binding to antioxidant response elements (AREs) on DNA. Interacts (via Destruction motif) with BTRC; leading to its ubiquitination and degradation. Interacts with CEBPB; the heterodimer represses expression of DSPP during odontoblast differentiation. Interacts with MOTS-c, a peptide produced by the mitochondrially encoded 12S rRNA MT-RNR1. Cleaved at Leu-104 by the aspartyl protease DDI2 following retrotranslocation, releasing the protein from the endoplasmic reticulum membrane and forming the transcription factor NRF1 that translocates into the nucleus. Ubiquitination is prerequisite for cleavage by aspartyl protease DDI2. In terms of processing, N-glycosylated in normal conditions, when it has a single-pass type II membrane protein topology, with the DNA-binding domain facing the endoplasmic reticulum lumen. Deglycosylated during retrotranslocation to the cytosolic side of the membrane, to have a single-pass type III membrane protein topology with the major part of the protein facing the cytosol. Post-translationally, ubiquitinated by the SCF(FBXW7) complex and SYVN1/HRD1, leading to its degradation by the proteasome. Ubiquitinated during retrotranslocation to the cytosolic side of the membrane: ubiquitination does not lead to degradation and is required for processing by the aspartyl protease DDI2 and subsequent release from the endoplasmic reticulum membrane. Phosphorylation by CK2 at Ser-519 inhibits transcription factor activity, possibly by affecting DNA-binding activity. Phosphorylation at Ser-590 is required for interaction with CEBPB. In terms of processing, ubiquitinated by the SCF(BTRC) complex in the nucleus, leading to its degradation by the proteasome.

Its subcellular location is the endoplasmic reticulum membrane. The protein localises to the nucleus. In terms of biological role, endoplasmic reticulum membrane sensor that translocates into the nucleus in response to various stresses to act as a transcription factor. Constitutes a precursor of the transcription factor NRF1. Able to detect various cellular stresses, such as cholesterol excess, oxidative stress or proteasome inhibition. In response to stress, it is released from the endoplasmic reticulum membrane following cleavage by the protease DDI2 and translocates into the nucleus to form the transcription factor NRF1. Acts as a key sensor of cholesterol excess: in excess cholesterol conditions, the endoplasmic reticulum membrane form of the protein directly binds cholesterol via its CRAC motif, preventing cleavage and release of the transcription factor NRF1, thereby allowing expression of genes promoting cholesterol removal, such as CD36. Involved in proteasome homeostasis: in response to proteasome inhibition, it is released from the endoplasmic reticulum membrane, translocates to the nucleus and activates expression of genes encoding proteasome subunits. Functionally, CNC-type bZIP family transcription factor that translocates to the nucleus and regulates expression of target genes in response to various stresses. Heterodimerizes with small-Maf proteins (MAFF, MAFG or MAFK) and binds DNA motifs including the antioxidant response elements (AREs), which regulate expression of genes involved in oxidative stress response. Activates or represses expression of target genes, depending on the context. Plays a key role in cholesterol homeostasis by acting as a sensor of cholesterol excess: in low cholesterol conditions, translocates into the nucleus and represses expression of genes involved in defense against cholesterol excess, such as CD36. In excess cholesterol conditions, the endoplasmic reticulum membrane form of the protein directly binds cholesterol via its CRAC motif, preventing cleavage and release of the transcription factor NRF1, thereby allowing expression of genes promoting cholesterol removal. Critical for redox balance in response to oxidative stress: acts by binding the AREs motifs on promoters and mediating activation of oxidative stress response genes, such as GCLC, GCLM, GSS, MT1 and MT2. Plays an essential role during fetal liver hematopoiesis: probably has a protective function against oxidative stress and is involved in lipid homeostasis in the liver. Involved in proteasome homeostasis: in response to proteasome inhibition, mediates the 'bounce-back' of proteasome subunits by translocating into the nucleus and activating expression of genes encoding proteasome subunits. Also involved in regulating glucose flux. Together with CEBPB; represses expression of DSPP during odontoblast differentiation. In response to ascorbic acid induction, activates expression of SP7/Osterix in osteoblasts. The chain is Endoplasmic reticulum membrane sensor NFE2L1 from Bos taurus (Bovine).